The sequence spans 123 residues: uncharacterized protein (123 aa).

The 101-residue stretch at 17-117 (SNDNAFLVDV…NNQDKGWKQN (101 aa)) folds into the Rhodanese domain.

This is an uncharacterized protein from Rickettsia rickettsii.